Consider the following 194-residue polypeptide: Probable chorismate pyruvate-lyase (194 aa).

Residues Arg77, Leu115, and Glu176 each coordinate substrate.

The protein belongs to the UbiC family.

The protein localises to the cytoplasm. It carries out the reaction chorismate = 4-hydroxybenzoate + pyruvate. The protein operates within cofactor biosynthesis; ubiquinone biosynthesis. In terms of biological role, removes the pyruvyl group from chorismate, with concomitant aromatization of the ring, to provide 4-hydroxybenzoate (4HB) for the ubiquinone pathway. This is Probable chorismate pyruvate-lyase from Cupriavidus pinatubonensis (strain JMP 134 / LMG 1197) (Cupriavidus necator (strain JMP 134)).